Here is a 341-residue protein sequence, read N- to C-terminus: Uroporphyrinogen decarboxylase (341 aa).

Substrate is bound by residues 23-27 (RQAGR), Asp73, Tyr148, Ser203, and His318.

It belongs to the uroporphyrinogen decarboxylase family. Homodimer.

It localises to the cytoplasm. The enzyme catalyses uroporphyrinogen III + 4 H(+) = coproporphyrinogen III + 4 CO2. It participates in porphyrin-containing compound metabolism; protoporphyrin-IX biosynthesis; coproporphyrinogen-III from 5-aminolevulinate: step 4/4. In terms of biological role, catalyzes the decarboxylation of four acetate groups of uroporphyrinogen-III to yield coproporphyrinogen-III. This Brucella anthropi (strain ATCC 49188 / DSM 6882 / CCUG 24695 / JCM 21032 / LMG 3331 / NBRC 15819 / NCTC 12168 / Alc 37) (Ochrobactrum anthropi) protein is Uroporphyrinogen decarboxylase.